Reading from the N-terminus, the 20-residue chain is Toxin CpTx-4a (20 aa).

This sequence belongs to the spider toxin CSTX family. Expressed by the venom gland.

The protein localises to the secreted. In terms of biological role, spider venom toxin that exhibits cytolytic activity by forming an alpha-helix across the membrane. Lethal to insect larvae. This Cheiracanthium punctorium (Yellow sac spider) protein is Toxin CpTx-4a.